Reading from the N-terminus, the 471-residue chain is UDP-N-acetylmuramate--L-alanine ligase (471 aa).

ATP is bound at residue 112 to 118; the sequence is GTHGKTT.

This sequence belongs to the MurCDEF family.

It is found in the cytoplasm. The enzyme catalyses UDP-N-acetyl-alpha-D-muramate + L-alanine + ATP = UDP-N-acetyl-alpha-D-muramoyl-L-alanine + ADP + phosphate + H(+). It functions in the pathway cell wall biogenesis; peptidoglycan biosynthesis. Its function is as follows. Cell wall formation. In Cupriavidus metallidurans (strain ATCC 43123 / DSM 2839 / NBRC 102507 / CH34) (Ralstonia metallidurans), this protein is UDP-N-acetylmuramate--L-alanine ligase.